We begin with the raw amino-acid sequence, 517 residues long: Histone H4 transcription factor (517 aa).

3 C2H2-type zinc fingers span residues 15–39 (LQCE…VTQH), 129–153 (FLCL…VEAH), and 169–193 (VLCG…LRSH). The segment at 199 to 221 (VACPTCGGMFANNTKFLDHIRRQ) adopts a C2H2-type 4; degenerate zinc-finger fold. 5 C2H2-type zinc fingers span residues 229–251 (FQCS…MRNH), 255–278 (YKCP…RFRH), 284–306 (FKCD…LDTH), 312–337 (YRCD…RKVH), and 345–368 (YKCH…RKKH). The interaction with NPAT stretch occupies residues 373-517 (PSGHPRFRYK…IAEEPEIQMV (145 aa)). The tract at residues 374–407 (SGHPRFRYKEHEDGYMRLQLVRYESVELTQQLLR) is required for activation of histone H4 transcription and contributes to DNA-binding. Residues 431 to 460 (TVPGEPGRKEEEEEGKGSEGTALSASQDNP) are disordered. The span at 451–460 (TALSASQDNP) shows a compositional bias: polar residues.

In terms of assembly, binds MBD2 and a histone deacetylase complex. Interacts with NPAT. Ubiquitinated. Ubiquitination may lead to proteasome-mediated degradation. In terms of tissue distribution, ubiquitous. Highly expressed in brain, heart, skeletal muscle, spleen, kidney, small intestine, placenta and liver.

It localises to the nucleus. Its function is as follows. Transcriptional repressor that binds to the consensus sequence 5'-CGGACGTT-3' and to the RB1 promoter. Transcriptional activator that promotes histone H4 gene transcription at the G1/S phase transition in conjunction with NPAT. Also activates transcription of the ATM and PRKDC genes. Autoregulates its expression by associating with its own promoter. The polypeptide is Histone H4 transcription factor (HINFP) (Homo sapiens (Human)).